Consider the following 516-residue polypeptide: GPI mannosyltransferase 4 (516 aa).

At 1–5 (MMRYQ) the chain is on the lumenal side. Residues 6 to 26 (WWLYLVYAIGLMLCLGPSYIH) form a helical membrane-spanning segment. The Cytoplasmic portion of the chain corresponds to 27–60 (PDEHFQCIEILAMQFMKVKGTIPWEFKSKFAARS). The helical transmembrane segment at 61–81 (YGPLLLVYGPLFTILESFPEI) threads the bilayer. At 82-175 (QDNPALILYS…IQRSNFKNSV (94 aa)) the chain is on the lumenal side. Residues 176–196 (ILGLIFSFGVFNRVTFPAFIF) traverse the membrane as a helical segment. The Cytoplasmic segment spans residues 197-210 (LPCLILFWKFYRVH). A helical membrane pass occupies residues 211–231 (WKSFSLLLLSFSFSSCLFVLI). Topologically, residues 232–270 (DTNIYNNGKGFVITPLNNLKYNLNVQNLQVHGLHPRYTH) are lumenal. The chain crosses the membrane as a helical span at residues 271–291 (LLVNLPQIVGPVLLLAIFSGY). Residues 292 to 295 (KLDK) lie on the Cytoplasmic side of the membrane. The helical transmembrane segment at 296-316 (LSTYAIISGLLFLSFFQHQEL) threads the bilayer. Position 317 (arginine 317) is a topological domain, lumenal. Residues 318–338 (FLVPLVPLLVTNLNWTPLSST) traverse the membrane as a helical segment. Residues 339-348 (LVNKKIFKGT) are Cytoplasmic-facing. Residues 349–369 (WLLFNIIMAFIMGISHQAGII) traverse the membrane as a helical segment. At 370-516 (QFLGDYFHFR…GLTVYSIELL (147 aa)) the chain is on the lumenal side. Residues asparagine 403 and asparagine 452 are each glycosylated (N-linked (GlcNAc...) asparagine).

The protein belongs to the glycosyltransferase 22 family. PIGZ subfamily.

The protein localises to the endoplasmic reticulum membrane. It participates in glycolipid biosynthesis; glycosylphosphatidylinositol-anchor biosynthesis. Functionally, alpha-1,2-mannosyltransferase involved in glycosylphosphatidylinositol-anchor biosynthesis. Transfers a fourth mannose to trimannosyl-GPIs during GPI precursor assembly. The presence of a fourth mannose in GPI is essential in fungi. Involved in plasmid maintenance with SMP2. The protein is GPI mannosyltransferase 4 (SMP3) of Saccharomyces cerevisiae (strain ATCC 204508 / S288c) (Baker's yeast).